The primary structure comprises 156 residues: Movement protein P17 (156 aa).

The homodimerization stretch occupies residues 38–54 (AEDAEEEAIAAQEELEF). Disordered stretches follow at residues 55–80 (PEDE…EVSP) and 131–156 (AKYH…IKRG). The tract at residues 57 to 156 (DEAQARHSCL…RAAPKLIKRG (100 aa)) is RNA-binding. Phosphoserine occurs at positions 71, 79, 137, and 140. Positions 144–156 (KLRRAAPKLIKRG) are enriched in basic residues.

The protein belongs to the polerovirus movement protein family. In terms of assembly, homodimer. Heterodimer with movement protein P3a. Post-translationally, expressed as a nonphosphorylated 20kDa form and a phosphorylated 22kDa form. Phosphorylated by a host PKC-related kinase. Serine phosphorylation is required for plamodesma targeting.

Its subcellular location is the host cell junction. The protein localises to the host plasmodesma. It is found in the host mitochondrion outer membrane. The protein resides in the host Golgi apparatus. It localises to the host chloroplast envelope. Together with movement protein P3a, facilitates long-distance movement of virions in host. Transports viral genome to neighboring plant cells directly through plasmosdesmata, without any budding. The movement protein allows efficient cell to cell propagation, by bypassing the host cell wall barrier. Binds ssRNA. This is Movement protein P17 from Solanum tuberosum (Potato).